A 108-amino-acid chain; its full sequence is FK506-binding protein 1 (108 aa).

The PPIase FKBP-type domain occupies 20 to 108; it reads GDAVTIHYVG…VFDVELLGIN (89 aa).

Belongs to the FKBP-type PPIase family. FKBP1 subfamily.

The protein localises to the cytoplasm. It catalyses the reaction [protein]-peptidylproline (omega=180) = [protein]-peptidylproline (omega=0). Its activity is regulated as follows. Inhibited by both FK506 and rapamycin. In terms of biological role, PPIases accelerate the folding of proteins. It catalyzes the cis-trans isomerization of proline imidic peptide bonds in oligopeptides. The protein is FK506-binding protein 1 (FPR1) of Yarrowia lipolytica (strain CLIB 122 / E 150) (Yeast).